Consider the following 202-residue polypeptide: Imidazoleglycerol-phosphate dehydratase (202 aa).

Belongs to the imidazoleglycerol-phosphate dehydratase family.

The protein resides in the cytoplasm. The catalysed reaction is D-erythro-1-(imidazol-4-yl)glycerol 3-phosphate = 3-(imidazol-4-yl)-2-oxopropyl phosphate + H2O. Its pathway is amino-acid biosynthesis; L-histidine biosynthesis; L-histidine from 5-phospho-alpha-D-ribose 1-diphosphate: step 6/9. The chain is Imidazoleglycerol-phosphate dehydratase from Acinetobacter baumannii (strain SDF).